The primary structure comprises 476 residues: Sulfate adenylyltransferase subunit 1 (476 aa).

Residues 17-232 (KDLLRLLTAG…LETVHIDSDN (216 aa)) form the tr-type G domain. Positions 26–33 (GSVDDGKS) are G1. 26–33 (GSVDDGKS) is a GTP binding site. Residues 84 to 88 (GITID) form a G2 region. Residues 105–108 (DTPG) form a G3 region. GTP is bound by residues 105 to 109 (DTPGH) and 160 to 163 (NKMD). Positions 160 to 163 (NKMD) are G4. A G5 region spans residues 197–199 (SAL).

This sequence belongs to the TRAFAC class translation factor GTPase superfamily. Classic translation factor GTPase family. CysN/NodQ subfamily. Heterodimer composed of CysD, the smaller subunit, and CysN.

The enzyme catalyses sulfate + ATP + H(+) = adenosine 5'-phosphosulfate + diphosphate. The protein operates within sulfur metabolism; hydrogen sulfide biosynthesis; sulfite from sulfate: step 1/3. In terms of biological role, with CysD forms the ATP sulfurylase (ATPS) that catalyzes the adenylation of sulfate producing adenosine 5'-phosphosulfate (APS) and diphosphate, the first enzymatic step in sulfur assimilation pathway. APS synthesis involves the formation of a high-energy phosphoric-sulfuric acid anhydride bond driven by GTP hydrolysis by CysN coupled to ATP hydrolysis by CysD. This is Sulfate adenylyltransferase subunit 1 from Bacteroides fragilis (strain YCH46).